The chain runs to 750 residues: MGSSSDIVPDRSPADDVAPVTDTKIPKEEPLTLRRTRPSRACTVRAQQRLQELQAAERKLKPPKKEYKREQHRRREEVVEEDEDSEDDDQEDEENDGDDESNPKQCVAGGSSTKIITSLVPPPEPSQMPRWNLRSMWELASVLNFLHVFRPLLKINAEFSAEEFETALLTPNDTLSDIHIPLLKAIPPVTRMALTRDTWVTVLCRKIRDCWHWVAEGDLPIVALQGREIEVYKNLDPAIRVVILKALCDIRVEQEDIRSYIDNSLKTGVHLSVFRKDRVGGDSHGVNFWYEEDPLIGHRLYREIRKAEVLKVKTKGSKILPNITYQWETVATNFDEFQDVSEKLLQSSSRIEVSLGKKLVKDMLPEIEKEHKRKEKLLKKQHRQALLLDNFVVVDGLAGRSLRDRKPVRYTFDDYDKSINDAIKITKKKHPSPEHPLHRRESARLDALANGRSTSSTHPTEPVNDTASGRSSDFADYDDFDEHRDESLDRRRRQRPQRYSATDFVETVSDNEVEFQSDDDIYGEAVYDEEYLKKRKQKKLSSGSEGDEEKGDEEYKWDEDNAEYEEEEEEEEEEDSLSASEEDSDEPRRAKKMPRRETKLRSRSNDFRPGLRRSKRATRIDYQQYEFSDSDKEATGLAKRKRFVEPDEPSDETGNGDFTMGSQDSEENANDPETKSGEEEEPRDVNDNADTTNGKENNQLNKSNGTTDQEEVEGVVGKRRYLDLNELAPVSGFDDGPSTVLKDDDKTDNS.

The segment at 1-125 (MGSSSDIVPD…ITSLVPPPEP (125 aa)) is disordered. Low complexity predominate over residues 45 to 54 (RAQQRLQELQ). Basic and acidic residues predominate over residues 55–77 (AAERKLKPPKKEYKREQHRRREE). Acidic residues predominate over residues 78 to 100 (VVEEDEDSEDDDQEDEENDGDDE). A DDT domain is found at 133-192 (LRSMWELASVLNFLHVFRPLLKINAEFSAEEFETALLTPNDTLSDIHIPLLKAIPPVTRM). 2 disordered regions span residues 450 to 505 (NGRS…TDFV) and 532 to 750 (LKKR…TDNS). A compositionally biased stretch (polar residues) spans 451-471 (GRSTSSTHPTEPVNDTASGRS). Positions 545 to 585 (EGDEEKGDEEYKWDEDNAEYEEEEEEEEEEDSLSASEEDSD) are enriched in acidic residues. Residues 595–606 (RRETKLRSRSND) show a composition bias toward basic and acidic residues. Over residues 688 to 707 (NADTTNGKENNQLNKSNGTT) the composition is skewed to polar residues. The span at 741–750 (LKDDDKTDNS) shows a compositional bias: basic and acidic residues.

In terms of assembly, interacts (via the DDT domain) with CHR11 (via C-terminus).

The protein resides in the nucleus. Its function is as follows. Probable transcription regulator. This is DDT domain-containing protein DDR4 from Arabidopsis thaliana (Mouse-ear cress).